The sequence spans 155 residues: MAEAAQQDAQQNFAIQRIFLKDVSFEAPNSPDMFQKEWNPDVKLDLDTQSRELGEGVYEVILRLTVTVKNAEDTAFLCEVQQGGIFSASEMEAGQLAHCLGAFCPNILFPYARETISSLVVKGTFPQLNLAPVNFDALFMNYLQNQAQQAEGEQA.

It belongs to the SecB family. As to quaternary structure, homotetramer, a dimer of dimers. One homotetramer interacts with 1 SecA dimer.

It localises to the cytoplasm. Functionally, one of the proteins required for the normal export of preproteins out of the cell cytoplasm. It is a molecular chaperone that binds to a subset of precursor proteins, maintaining them in a translocation-competent state. It also specifically binds to its receptor SecA. This Vibrio atlanticus (strain LGP32) (Vibrio splendidus (strain Mel32)) protein is Protein-export protein SecB.